Consider the following 239-residue polypeptide: O-methyltransferase ankF (239 aa).

Residues Glu-71, Gly-73–Thr-74, Ser-79, Glu-98, and Ala-127 each bind S-adenosyl-L-methionine.

The protein belongs to the class I-like SAM-binding methyltransferase superfamily. Cation-dependent O-methyltransferase family.

It carries out the reaction NK13650 B + S-adenosyl-L-methionine = NK13650 D + S-adenosyl-L-homocysteine + H(+). It functions in the pathway secondary metabolite biosynthesis. Its function is as follows. O-methyltransferase; part of the ank cluster that mediates the biosynthesis of NK13650 C, a highly modified cyclo-arginine-tyrosine dipeptide. AnkF converts NK13650 B to produce NK13650 D via methylation of the C-17 phenol group. Within the pathway, the cyclodipeptide synthase ankA acts as the scaffold-generating enzyme and is responsible for formation of the cyclo-Arg-Tyr diketopiperazine (cRY) from L-Arg and L-Tyr. The ankA product cRY is desaturated by the cytochrome P450 monooxygenase ankB to yield a dehydro-cyclodipeptide intermediate. The FAD-dependent monooxygenase ankC then installs the m-OH, ankD catalyzes the attachment of L-homoserine, and ankE ligates citrate to the ankD product to yield NK13650 B. The O-methyltransferase ankF is responsible for methylation of the C-17 phenol group of NK13650 B to produce NK13650 D. Amidation of NK13650 D with L-Asp by ankG then leads to the production of NK13650 C, whereas amidation of NK13650 B produces NK13650 A. This chain is O-methyltransferase ankF, found in Aspergillus thermomutatus (Neosartorya pseudofischeri).